Here is a 448-residue protein sequence, read N- to C-terminus: NK1 transcription factor-related protein 1 (448 aa).

A compositionally biased stretch (low complexity) spans 1 to 13; the sequence is MSASGPEAPGDIP. 3 disordered regions span residues 1–80, 115–299, and 350–397; these read MSAS…LRPT, ASAP…PRRA, and KWKK…GAPL. Pro residues predominate over residues 14 to 30; sequence ALPPPPQPGSGPAPPAP. Low complexity-rich tracts occupy residues 62 to 79 and 115 to 129; these read PAAP…PLRP and ASAP…SGRP. Basic and acidic residues predominate over residues 130 to 139; it reads PRAEELERRA. Positions 186–203 are enriched in acidic residues; sequence SGDEVPDDEDDDEDEAPE. A compositionally biased stretch (basic and acidic residues) spans 205 to 214; sequence EAARGAEEAR. Composition is skewed to gly residues over residues 215-227 and 259-270; these read GGGG…GSGC and PPGGAAAPGGAG. Low complexity predominate over residues 271 to 280; it reads TTPQGTATAA. Residues 296–355 constitute a DNA-binding region (homeobox); that stretch reads PRRARTAFTYEQLVALENKFKATRYLSVCERLNLALSLSLTETQVKIWFQNRRTKWKKQN. Positions 364–382 are enriched in gly residues; the sequence is TGGGGGPGPGAGPGTGLPG.

The protein belongs to the NK-1 homeobox family. Expressed in hemopoietic progenitor cells.

The protein resides in the nucleus. Functionally, may be required for the coordinated crosstalk of factors involved in the maintenance of energy homeostasis, possibly by regulating the transcription of specific factors involved in energy balance. In Homo sapiens (Human), this protein is NK1 transcription factor-related protein 1.